The sequence spans 494 residues: Tripartite motif-containing protein 5 (494 aa).

Ala2 carries the N-acetylalanine modification. Residues 15–59 form an RING-type zinc finger; it reads CPICLELLTEPLSLDCGHSFCQACITANHKKSMLHQGERSCPLCR. Ser86 bears the Phosphoserine mark. The B box-type zinc-finger motif lies at 91–132; sequence QKVDHCARHGEKLLLFCQQDGNVICWLCERSQEHRGHHTLLV. The Zn(2+) site is built by Cys96, His99, Cys118, and His124. Residues 132-222 adopt a coiled-coil conformation; the sequence is VEEVAQTYRE…KRLTQSENDM (91 aa). Residues 186 to 199 form a required for interaction with GABARAP and for autophagy region; the sequence is FKQLRDILDCEESN. The region spanning 280-494 is the B30.2/SPRY domain; it reads PDLKGMLQVF…LPMTLCSPRS (215 aa).

The protein belongs to the TRIM/RBCC family. As to quaternary structure, can form homodimers and homotrimers. In addition to lower-order dimerization, also exhibits a higher-order multimerization and both low- and high-order multimerizations are essential for its restriction activity. Interacts with BTBD1 and BTBD2. Interacts with PSMC4, PSMC5, PSMD7 and HSPA8/HSC70. Interacts (via B30.2/SPRY domain) with HSPA1A/B. Interacts with PSMC2, MAP3K7/TAK1, TAB2 and TAB3. Interacts with SQSTM1. Interacts with TRIM6 and TRIM34. Interacts with ULK1 (phosphorylated form), GABARAP, GABARAPL1, GABARAPL2, MAP1LC3A, MAP1LC3C and BECN1. Degraded in a proteasome-independent fashion in the absence of viral infection but in a proteasome-dependent fashion following exposure to restriction sensitive virus. In terms of processing, autoubiquitinated in a RING finger- and UBE2D2-dependent manner. Monoubiquitinated by TRIM21. Deubiquitinated by Yersinia YopJ. Ubiquitination may not lead to proteasomal degradation.

It is found in the cytoplasm. Its subcellular location is the nucleus. The enzyme catalyses S-ubiquitinyl-[E2 ubiquitin-conjugating enzyme]-L-cysteine + [acceptor protein]-L-lysine = [E2 ubiquitin-conjugating enzyme]-L-cysteine + N(6)-ubiquitinyl-[acceptor protein]-L-lysine.. It functions in the pathway protein modification; protein ubiquitination. Capsid-specific restriction factor that prevents infection from non-host-adapted retroviruses. Blocks viral replication early in the life cycle, after viral entry but before reverse transcription. In addition to acting as a capsid-specific restriction factor, also acts as a pattern recognition receptor that activates innate immune signaling in response to the retroviral capsid lattice. Binding to the viral capsid triggers its E3 ubiquitin ligase activity, and in concert with the heterodimeric ubiquitin conjugating enzyme complex UBE2V1-UBE2N (also known as UBC13-UEV1A complex) generates 'Lys-63'-linked polyubiquitin chains, which in turn are catalysts in the autophosphorylation of the MAP3K7/TAK1 complex (includes TAK1, TAB2, and TAB3). Activation of the MAP3K7/TAK1 complex by autophosphorylation results in the induction and expression of NF-kappa-B and MAPK-responsive inflammatory genes, thereby leading to an innate immune response in the infected cell. Plays a role in regulating autophagy through activation of autophagy regulator BECN1 by causing its dissociation from its inhibitors BCL2 and TAB2. The polypeptide is Tripartite motif-containing protein 5 (TRIM5) (Pithecia pithecia (White-faced saki)).